The following is a 134-amino-acid chain: uncharacterized protein (134 aa).

A run of 3 helical transmembrane segments spans residues 21-41, 52-72, and 95-115; these read FSTT…LYLI, LVLL…TPYE, and IVMA…VYII.

It is found in the host membrane. This is an uncharacterized protein from Acidianus two-tailed virus (ATV).